A 41-amino-acid polypeptide reads, in one-letter code: Sucrose porin (41 aa).

The N-terminal stretch at 1–22 (MYRKSTLAMLIALLTSAASAHA) is a signal peptide.

It belongs to the porin LamB (TC 1.B.3) family. As to quaternary structure, homotrimer.

Its subcellular location is the cell outer membrane. In terms of biological role, porin for sucrose uptake. This is Sucrose porin (scrY) from Salmonella thompson.